The sequence spans 234 residues: PHD finger protein ING1 (234 aa).

Positions 129–166 are disordered; it reads NNGKAGNAGEGGRGGRKKTRLATAASTAAASTGMTSSN. Residues 149 to 165 are compositionally biased toward low complexity; it reads LATAASTAAASTGMTSS. Residues 178-227 form a PHD-type zinc finger; the sequence is PTYCICNQVSFGEMVACDNNACKIEWFHFGCVGLKEQPKGKWYCPECATV. Positions 181, 183, 194, 199, 205, 208, 221, and 224 each coordinate Zn(2+).

The protein belongs to the ING family. In terms of assembly, interacts with H3K4me3 and to a lesser extent with H3K4me2. As to expression, ubiquitously expressed.

It is found in the nucleus. Functionally, histone-binding component that specifically recognizes H3 tails trimethylated on 'Lys-4' (H3K4me3), which mark transcription start sites of virtually all active genes. The chain is PHD finger protein ING1 (ING1) from Arabidopsis thaliana (Mouse-ear cress).